Here is a 493-residue protein sequence, read N- to C-terminus: Cysteine--tRNA ligase (493 aa).

Position 31 (C31) interacts with Zn(2+). The 'HIGH' region signature appears at 33-43 (PTVYGDAHLGH). Zn(2+) is bound by residues C226, H251, and E255. The 'KMSKS' region signature appears at 283 to 287 (KMGKS). K286 contributes to the ATP binding site.

It belongs to the class-I aminoacyl-tRNA synthetase family. In terms of assembly, monomer. Zn(2+) serves as cofactor.

It localises to the cytoplasm. The enzyme catalyses tRNA(Cys) + L-cysteine + ATP = L-cysteinyl-tRNA(Cys) + AMP + diphosphate. This is Cysteine--tRNA ligase from Phocaeicola vulgatus (strain ATCC 8482 / DSM 1447 / JCM 5826 / CCUG 4940 / NBRC 14291 / NCTC 11154) (Bacteroides vulgatus).